The primary structure comprises 117 residues: Putative membrane protein insertion efficiency factor (117 aa).

It belongs to the UPF0161 family.

The protein resides in the cell inner membrane. Could be involved in insertion of integral membrane proteins into the membrane. The polypeptide is Putative membrane protein insertion efficiency factor (Helicobacter pylori (strain ATCC 700392 / 26695) (Campylobacter pylori)).